Reading from the N-terminus, the 251-residue chain is MGLMQKFDEPNIITTSTDKLFNWARKNSLWPLQFGLACCAIEMMSTGMAHNDLERFGAGFFAGSPRQADVMIVSGTVSTKMAERMTRLYEQMPEPKWVIAMGACAISGGPFLDGYSVLMGADRVIPVDVYVPGCPPRPEALIFGIMTLQKKIEREQQVGYEKPRPALVDEEGNIREYLPEREYRQISEGKAHRPKGIKRLPRTYVFQRKGLPPGSMTDVGWIPPEARERLKAGRGAGASGSGEREEGKEGA.

[4Fe-4S] cluster is bound by residues Cys-38, Cys-39, Cys-104, and Cys-134. The segment at 208 to 251 (RKGLPPGSMTDVGWIPPEARERLKAGRGAGASGSGEREEGKEGA) is disordered. The segment covering 242-251 (GEREEGKEGA) has biased composition (basic and acidic residues).

Belongs to the complex I 20 kDa subunit family. In terms of assembly, NDH-1 is composed of 14 different subunits. Subunits NuoB, C, D, E, F, and G constitute the peripheral sector of the complex. It depends on [4Fe-4S] cluster as a cofactor.

It is found in the cell membrane. It carries out the reaction a quinone + NADH + 5 H(+)(in) = a quinol + NAD(+) + 4 H(+)(out). In terms of biological role, NDH-1 shuttles electrons from NADH, via FMN and iron-sulfur (Fe-S) centers, to quinones in the respiratory chain. The immediate electron acceptor for the enzyme in this species is believed to be a menaquinone. Couples the redox reaction to proton translocation (for every two electrons transferred, four hydrogen ions are translocated across the cytoplasmic membrane), and thus conserves the redox energy in a proton gradient. The polypeptide is NADH-quinone oxidoreductase subunit B (Rubrobacter xylanophilus (strain DSM 9941 / JCM 11954 / NBRC 16129 / PRD-1)).